The chain runs to 564 residues: MLKKLFFILSKEDKNFLFFLLVFSVFISFIETFAISLVMPFITLASDFSYFDRNKYLISLKEYLNIPVFEIIVYFGVGLIVFYVFRALLNAYYFHLLARFSKGRYHAIAYKVFSKFLNINYEKFTQKNQSEILKSITGEVYNLSTMISSFLLLMSEIFVVLLLYALMLLINYKITLFLSIFMVLNAFILVKILSPIIKKAGVRREEAMKNFFEILNTNLNNFKFIKLKTKEDGVLSLFKAQSEAFSKANITNESVAAVPRIYLEGIGFCVLVFIVVFLVLKNESDISGILSTISIFVLALYRLMPSANRIITSYHDLLYYHSSLDIIYQNLRQEEENLGEEKLSFNQELKICNLSFGYEGKKYLFKNLNLNIKKGEKIAFIGESGCGKSTLVDLIIGLLKPKEGQILIDEQELNANNTKNYRQKIGYIPQNIYLFNDSIAKNITFGDAVDEEKLNRVIKQANLEHFIKNLPQGVQTKVGDGGSNLSGGQKQRIAIARALYLEPEMLVLDEATSALDTQSEAKIMDEIYKISKDKTMIIIAHRLSTITQCDKVYRLEHGKLKEEK.

The Cytoplasmic segment spans residues 1-15 (MLKKLFFILSKEDKN). Residues 16–38 (FLFFLLVFSVFISFIETFAISLV) form a helical membrane-spanning segment. The 303-residue stretch at 17–319 (LFFLLVFSVF…IITSYHDLLY (303 aa)) folds into the ABC transmembrane type-1 domain. Over 39 to 76 (MPFITLASDFSYFDRNKYLISLKEYLNIPVFEIIVYFG) the chain is Extracellular. Residues 46-67 (SDFSYFDRNKYLISLKEYLNIP) are important for stimulation of ATPase activity by lipid-linked oligosaccharides and subsequent translocation of lipid-linked oligosaccharides. A helical transmembrane segment spans residues 77–98 (VGLIVFYVFRALLNAYYFHLLA). Residues 99–149 (RFSKGRYHAIAYKVFSKFLNINYEKFTQKNQSEILKSITGEVYNLSTMISS) are Cytoplasmic-facing. Residues 150–170 (FLLLMSEIFVVLLLYALMLLI) traverse the membrane as a helical segment. The Extracellular segment spans residues 171–173 (NYK). Residues 174–197 (ITLFLSIFMVLNAFILVKILSPII) form a helical membrane-spanning segment. Residues 198-254 (KKAGVRREEAMKNFFEILNTNLNNFKFIKLKTKEDGVLSLFKAQSEAFSKANITNES) are Cytoplasmic-facing. A helical transmembrane segment spans residues 255-276 (VAAVPRIYLEGIGFCVLVFIVV). Residues 277–292 (FLVLKNESDISGILST) are Extracellular-facing. A helical transmembrane segment spans residues 293–314 (ISIFVLALYRLMPSANRIITSY). Over 315–564 (HDLLYYHSSL…LEHGKLKEEK (250 aa)) the chain is Cytoplasmic. The 216-residue stretch at 349–564 (LKICNLSFGY…LEHGKLKEEK (216 aa)) folds into the ABC transporter domain. 382–389 (GESGCGKS) serves as a coordination point for ATP.

It belongs to the ABC transporter superfamily. As to quaternary structure, homodimer; domain-swapped. Helices that arise in transmembrane regions 4 and 5 from one subunit cross over and contact the nucleotide-binding domain from the other subunit.

Its subcellular location is the cell inner membrane. It carries out the reaction ATP + H2O + lipopolysaccharideSide 1 = ADP + phosphate + lipopolysaccharideSide 2.. Its pathway is protein modification; protein glycosylation. In terms of biological role, mediates the ATP-dependent translocation of the undecaprenylpyrophosphate-linked heptasaccharide intermediate across the cell membrane; this is an essential step during the N-linked protein glycosylation pathway. Transport across the membrane is effected via ATP-driven conformation changes. Most likely, only the polar and charged part of the glycolipid enter the substrate-binding cavity, and the lipid tail remains exposed to the membrane lipids during the transmembrane flipping process. In Campylobacter jejuni subsp. jejuni serotype O:2 (strain ATCC 700819 / NCTC 11168), this protein is Protein glycosylation K (pglK).